The chain runs to 177 residues: Macro domain-containing protein in non 5'region (177 aa).

The 177-residue stretch at M1 to R177 folds into the Macro domain.

Belongs to the MacroD-type family.

In Streptomyces griseus, this protein is Macro domain-containing protein in non 5'region.